A 289-amino-acid polypeptide reads, in one-letter code: BTB/POZ domain-containing protein KCTD7 (289 aa).

The segment at 1–40 is disordered; the sequence is MVVVTGREPDSRRPDGAMSSSDAEDDFLEPATPTATQAGH. Positions 53 to 141 constitute a BTB domain; it reads VPLNIGGAHF…YAIGPLLEQL (89 aa).

As to quaternary structure, interacts with CUL3.

The protein localises to the cell membrane. It localises to the cytoplasm. Its subcellular location is the cytosol. May be involved in the control of excitability of cortical neurons. The sequence is that of BTB/POZ domain-containing protein KCTD7 (KCTD7) from Bos taurus (Bovine).